The primary structure comprises 186 residues: Small ribosomal subunit protein uS5 (186 aa).

Positions 20–83 (FVDKLVHINR…EAAKRDMIFV (64 aa)) constitute an S5 DRBM domain.

Belongs to the universal ribosomal protein uS5 family. In terms of assembly, part of the 30S ribosomal subunit. Contacts proteins S4 and S8.

In terms of biological role, with S4 and S12 plays an important role in translational accuracy. Functionally, located at the back of the 30S subunit body where it stabilizes the conformation of the head with respect to the body. This Brucella ovis (strain ATCC 25840 / 63/290 / NCTC 10512) protein is Small ribosomal subunit protein uS5.